A 1207-amino-acid chain; its full sequence is DNA-directed RNA polymerase subunit beta' (1207 aa).

Positions 60, 62, 75, and 78 each coordinate Zn(2+). Positions 449, 451, and 453 each coordinate Mg(2+). Zn(2+) contacts are provided by Cys822, Cys896, Cys903, and Cys906.

The protein belongs to the RNA polymerase beta' chain family. As to quaternary structure, the RNAP catalytic core consists of 2 alpha, 1 beta, 1 beta' and 1 omega subunit. When a sigma factor is associated with the core the holoenzyme is formed, which can initiate transcription. The cofactor is Mg(2+). It depends on Zn(2+) as a cofactor.

It catalyses the reaction RNA(n) + a ribonucleoside 5'-triphosphate = RNA(n+1) + diphosphate. Its function is as follows. DNA-dependent RNA polymerase catalyzes the transcription of DNA into RNA using the four ribonucleoside triphosphates as substrates. The chain is DNA-directed RNA polymerase subunit beta' from Staphylococcus saprophyticus subsp. saprophyticus (strain ATCC 15305 / DSM 20229 / NCIMB 8711 / NCTC 7292 / S-41).